The sequence spans 59 residues: Large ribosomal subunit protein bL32 (59 aa).

Basic residues predominate over residues 1 to 20 (MAVPKKKTSKGKRNQRHATW). Positions 1–22 (MAVPKKKTSKGKRNQRHATWKG) are disordered.

Belongs to the bacterial ribosomal protein bL32 family.

In Prochlorococcus marinus (strain NATL1A), this protein is Large ribosomal subunit protein bL32.